Here is a 262-residue protein sequence, read N- to C-terminus: Hydroxyethylthiazole kinase (262 aa).

Methionine 50 contributes to the substrate binding site. 2 residues coordinate ATP: arginine 125 and threonine 171. Glycine 198 is a substrate binding site.

It belongs to the Thz kinase family. It depends on Mg(2+) as a cofactor.

The enzyme catalyses 5-(2-hydroxyethyl)-4-methylthiazole + ATP = 4-methyl-5-(2-phosphooxyethyl)-thiazole + ADP + H(+). It participates in cofactor biosynthesis; thiamine diphosphate biosynthesis; 4-methyl-5-(2-phosphoethyl)-thiazole from 5-(2-hydroxyethyl)-4-methylthiazole: step 1/1. Functionally, catalyzes the phosphorylation of the hydroxyl group of 4-methyl-5-beta-hydroxyethylthiazole (THZ). The polypeptide is Hydroxyethylthiazole kinase (Shigella flexneri serotype 5b (strain 8401)).